The following is a 466-amino-acid chain: MSLSLWQQCLARLQDELPATEFSMWIRPLQAELSDNTLALYAPNRFVLDWVRDKYLNNINGLLNTFCGADAPQLRFEVGTKPVTQTLKTPVHNVVAPTQTTTAQPQRVAPAARSGWDNVPAPAEPTYRSNVNVKHTFDNFVEGKSNQLARAAARQVADNPGGAYNPLFLYGGTGLGKTHLLHAVGNGIMARKPNAKVVYMHSERFVQDMVKALQNNAIEEFKRYYRSVDALLIDDIQFFANKERSQEEFFHTFNALLEGNQQIILTSDRYPKEINGVEDRLKSRFGWGLTVAIEPPELETRVAILMKKADENDIRLPGEVAFFIAKRLRSNVRELEGALNRVIANANFTGRAITIDFVREALRDLLALQEKLVTIDNIQKTVAEYYKIKIADLLSKRRSRSVARPRQMAMALAKELTNYSLPEIGDAFGGRDHTTVLHACRKIEQLREESHDIKEDFSNLIRTLSS.

A domain I, interacts with DnaA modulators region spans residues 1–86 (MSLSLWQQCL…EVGTKPVTQT (86 aa)). The interval 86–129 (TLKTPVHNVVAPTQTTTAQPQRVAPAARSGWDNVPAPAEPTYRS) is domain II. A domain III, AAA+ region region spans residues 130 to 346 (NVNVKHTFDN…GALNRVIANA (217 aa)). Residues Gly174, Gly176, Lys177, and Thr178 each coordinate ATP. The segment at 347–466 (NFTGRAITID…FSNLIRTLSS (120 aa)) is domain IV, binds dsDNA.

It belongs to the DnaA family. In terms of assembly, oligomerizes as a right-handed, spiral filament on DNA at oriC.

Its subcellular location is the cytoplasm. Functionally, plays an essential role in the initiation and regulation of chromosomal replication. ATP-DnaA binds to the origin of replication (oriC) to initiate formation of the DNA replication initiation complex once per cell cycle. Binds the DnaA box (a 9 base pair repeat at the origin) and separates the double-stranded (ds)DNA. Forms a right-handed helical filament on oriC DNA; dsDNA binds to the exterior of the filament while single-stranded (ss)DNA is stabiized in the filament's interior. The ATP-DnaA-oriC complex binds and stabilizes one strand of the AT-rich DNA unwinding element (DUE), permitting loading of DNA polymerase. After initiation quickly degrades to an ADP-DnaA complex that is not apt for DNA replication. Binds acidic phospholipids. The chain is Chromosomal replication initiator protein DnaA from Salmonella choleraesuis (strain SC-B67).